Consider the following 117-residue polypeptide: Large ribosomal subunit protein uL18 (117 aa).

Belongs to the universal ribosomal protein uL18 family. As to quaternary structure, part of the 50S ribosomal subunit; part of the 5S rRNA/L5/L18/L25 subcomplex. Contacts the 5S and 23S rRNAs.

In terms of biological role, this is one of the proteins that bind and probably mediate the attachment of the 5S RNA into the large ribosomal subunit, where it forms part of the central protuberance. The chain is Large ribosomal subunit protein uL18 from Actinobacillus pleuropneumoniae serotype 5b (strain L20).